The sequence spans 186 residues: Elongation factor P (186 aa).

It belongs to the elongation factor P family.

Its subcellular location is the cytoplasm. The protein operates within protein biosynthesis; polypeptide chain elongation. Functionally, involved in peptide bond synthesis. Stimulates efficient translation and peptide-bond synthesis on native or reconstituted 70S ribosomes in vitro. Probably functions indirectly by altering the affinity of the ribosome for aminoacyl-tRNA, thus increasing their reactivity as acceptors for peptidyl transferase. The polypeptide is Elongation factor P (Neisseria gonorrhoeae (strain ATCC 700825 / FA 1090)).